The following is a 419-amino-acid chain: Histidine--tRNA ligase (419 aa).

The protein belongs to the class-II aminoacyl-tRNA synthetase family. As to quaternary structure, homodimer.

It localises to the cytoplasm. The enzyme catalyses tRNA(His) + L-histidine + ATP = L-histidyl-tRNA(His) + AMP + diphosphate + H(+). In Desulforamulus reducens (strain ATCC BAA-1160 / DSM 100696 / MI-1) (Desulfotomaculum reducens), this protein is Histidine--tRNA ligase.